The following is a 332-amino-acid chain: Adenosine deaminase (332 aa).

Residues H12 and H14 each contribute to the Zn(2+) site. H14, D16, and G170 together coordinate substrate. H197 provides a ligand contact to Zn(2+). E200 serves as the catalytic Proton donor. A Zn(2+)-binding site is contributed by D278. D279 is a substrate binding site.

The protein belongs to the metallo-dependent hydrolases superfamily. Adenosine and AMP deaminases family. Adenosine deaminase subfamily. Zn(2+) is required as a cofactor.

It catalyses the reaction adenosine + H2O + H(+) = inosine + NH4(+). It carries out the reaction 2'-deoxyadenosine + H2O + H(+) = 2'-deoxyinosine + NH4(+). Its function is as follows. Catalyzes the hydrolytic deamination of adenosine and 2-deoxyadenosine. This Erwinia tasmaniensis (strain DSM 17950 / CFBP 7177 / CIP 109463 / NCPPB 4357 / Et1/99) protein is Adenosine deaminase.